Consider the following 147-residue polypeptide: Small ribosomal subunit protein bS6 (147 aa).

A disordered region spans residues 107-147 (KEGRERKARPARAERRDDTEAEDLSDEEGVEAEDFEEEQGV). The segment covering 125 to 147 (TEAEDLSDEEGVEAEDFEEEQGV) has biased composition (acidic residues).

This sequence belongs to the bacterial ribosomal protein bS6 family.

Binds together with bS18 to 16S ribosomal RNA. This chain is Small ribosomal subunit protein bS6, found in Cellvibrio japonicus (strain Ueda107) (Pseudomonas fluorescens subsp. cellulosa).